The following is a 217-amino-acid chain: ATP-dependent Clp protease proteolytic subunit 2 (217 aa).

The active-site Nucleophile is the Ser-113. His-138 is an active-site residue.

It belongs to the peptidase S14 family. As to quaternary structure, fourteen ClpP subunits assemble into 2 heptameric rings which stack back to back to give a disk-like structure with a central cavity, resembling the structure of eukaryotic proteasomes.

It localises to the cytoplasm. The catalysed reaction is Hydrolysis of proteins to small peptides in the presence of ATP and magnesium. alpha-casein is the usual test substrate. In the absence of ATP, only oligopeptides shorter than five residues are hydrolyzed (such as succinyl-Leu-Tyr-|-NHMec, and Leu-Tyr-Leu-|-Tyr-Trp, in which cleavage of the -Tyr-|-Leu- and -Tyr-|-Trp bonds also occurs).. In terms of biological role, cleaves peptides in various proteins in a process that requires ATP hydrolysis. Has a chymotrypsin-like activity. Plays a major role in the degradation of misfolded proteins. The protein is ATP-dependent Clp protease proteolytic subunit 2 of Frankia casuarinae (strain DSM 45818 / CECT 9043 / HFP020203 / CcI3).